The chain runs to 284 residues: NAD kinase (284 aa).

Residue Asp60 is the Proton acceptor of the active site. Residues 60–61, 134–135, Arg145, Lys162, Asp164, 175–180, and Gln234 each bind NAD(+); these read DG, NE, and TAYSFS.

This sequence belongs to the NAD kinase family. A divalent metal cation is required as a cofactor.

It is found in the cytoplasm. It catalyses the reaction NAD(+) + ATP = ADP + NADP(+) + H(+). In terms of biological role, involved in the regulation of the intracellular balance of NAD and NADP, and is a key enzyme in the biosynthesis of NADP. Catalyzes specifically the phosphorylation on 2'-hydroxyl of the adenosine moiety of NAD to yield NADP. The polypeptide is NAD kinase (Clostridium botulinum (strain Alaska E43 / Type E3)).